The primary structure comprises 326 residues: Vitamin B12 import system permease protein BtuC (326 aa).

Helical transmembrane passes span Trp-15–Glu-35, Leu-61–Phe-81, Pro-88–Gly-108, Leu-112–Leu-132, Leu-146–Phe-166, Gly-184–Ile-204, Gly-240–Ile-260, Val-274–Ala-294, and Glu-302–Leu-322.

The protein belongs to the binding-protein-dependent transport system permease family. FecCD subfamily. The complex is composed of two ATP-binding proteins (BtuD), two transmembrane proteins (BtuC) and a solute-binding protein (BtuF).

It is found in the cell inner membrane. Part of the ABC transporter complex BtuCDF involved in vitamin B12 import. Involved in the translocation of the substrate across the membrane. In Escherichia coli O8 (strain IAI1), this protein is Vitamin B12 import system permease protein BtuC.